The sequence spans 391 residues: Origin recognition complex subunit 2 (391 aa).

The tract at residues 1–43 is disordered; the sequence is MEEYTDSGEDKNVYSDDDNDYFTASTQNNRTSKNTDSSPLDPK. Polar residues predominate over residues 22–38; sequence FTASTQNNRTSKNTDSS.

This sequence belongs to the ORC2 family. ORC is composed of six subunits.

Its subcellular location is the nucleus. In terms of biological role, component of the origin recognition complex (ORC) that binds origins of replication. DNA-binding is ATP-dependent, however specific DNA sequences that define origins of replication have not been identified so far. ORC is required to assemble the pre-replication complex necessary to initiate DNA replication. This is Origin recognition complex subunit 2 (orcB) from Dictyostelium discoideum (Social amoeba).